We begin with the raw amino-acid sequence, 49 residues long: Large ribosomal subunit protein bL33D (49 aa).

Belongs to the bacterial ribosomal protein bL33 family.

The sequence is that of Large ribosomal subunit protein bL33D (rpmG4) from Enterococcus faecalis (strain ATCC 700802 / V583).